A 67-amino-acid chain; its full sequence is UPF0337 protein CC_0938 (67 aa).

A disordered region spans residues 37–67; the sequence is AAQKAKGDLQNKVGKAQDKARRRDQALNARL. Over residues 41–61 the composition is skewed to basic and acidic residues; it reads AKGDLQNKVGKAQDKARRRDQ.

Belongs to the UPF0337 (CsbD) family.

This chain is UPF0337 protein CC_0938, found in Caulobacter vibrioides (strain ATCC 19089 / CIP 103742 / CB 15) (Caulobacter crescentus).